The primary structure comprises 296 residues: Diheme cytochrome c-type (296 aa).

The heme c site is built by Cys-52, Cys-55, His-56, Cys-202, Cys-205, and His-206.

Binds 2 heme c groups covalently per subunit.

Its subcellular location is the cell membrane. Its function is as follows. Particularly expressed when cells generate energy via aerobic respiration. In Cereibacter sphaeroides (strain ATCC 17023 / DSM 158 / JCM 6121 / CCUG 31486 / LMG 2827 / NBRC 12203 / NCIMB 8253 / ATH 2.4.1.) (Rhodobacter sphaeroides), this protein is Diheme cytochrome c-type (cycG).